Reading from the N-terminus, the 125-residue chain is Monothiol glutaredoxin-S2 (125 aa).

The 97-residue stretch at 28 to 124 folds into the Glutaredoxin domain; sequence AERVGRLVRE…PRLREVGALC (97 aa). Residue Cys48 coordinates [2Fe-2S] cluster.

The protein belongs to the glutaredoxin family. CC-type subfamily.

Its subcellular location is the cytoplasm. Functionally, may only reduce GSH-thiol disulfides, but not protein disulfides. The polypeptide is Monothiol glutaredoxin-S2 (GRXS2) (Oryza sativa subsp. japonica (Rice)).